The following is a 395-amino-acid chain: Cystathionine beta-lyase (395 aa).

K210 is subject to N6-(pyridoxal phosphate)lysine.

This sequence belongs to the trans-sulfuration enzymes family. As to quaternary structure, homotetramer. Pyridoxal 5'-phosphate serves as cofactor.

Its subcellular location is the cytoplasm. It carries out the reaction L,L-cystathionine + H2O = L-homocysteine + pyruvate + NH4(+). The catalysed reaction is an S-substituted L-cysteine + H2O = a thiol + pyruvate + NH4(+). It functions in the pathway amino-acid biosynthesis; L-methionine biosynthesis via de novo pathway; L-homocysteine from L-cystathionine: step 1/1. Its function is as follows. Catalyzes the cleavage of cystathionine to homocysteine, pyruvate and ammonia during methionine biosynthesis. In Salmonella typhimurium (strain LT2 / SGSC1412 / ATCC 700720), this protein is Cystathionine beta-lyase (metC).